A 336-amino-acid chain; its full sequence is Foldase protein PrsA (336 aa).

Residues 1–22 (MKSAKKLLSVLCLGIFILTFTA) form the signal peptide. Cys23 carries the N-palmitoyl cysteine lipid modification. Residue Cys23 is the site of S-diacylglycerol cysteine attachment. One can recognise a PpiC domain in the interval 194–286 (PNTMNVSHIL…WGYHIIKVNS (93 aa)).

Belongs to the PrsA family.

It is found in the cell membrane. The catalysed reaction is [protein]-peptidylproline (omega=180) = [protein]-peptidylproline (omega=0). Its function is as follows. Plays a major role in protein secretion by helping the post-translocational extracellular folding of several secreted proteins. The sequence is that of Foldase protein PrsA from Clostridium botulinum (strain ATCC 19397 / Type A).